Consider the following 300-residue polypeptide: 33 kDa chaperonin (300 aa).

2 cysteine pairs are disulfide-bonded: Cys-235–Cys-237 and Cys-269–Cys-272.

The protein belongs to the HSP33 family. Post-translationally, under oxidizing conditions two disulfide bonds are formed involving the reactive cysteines. Under reducing conditions zinc is bound to the reactive cysteines and the protein is inactive.

The protein resides in the cytoplasm. Its function is as follows. Redox regulated molecular chaperone. Protects both thermally unfolding and oxidatively damaged proteins from irreversible aggregation. Plays an important role in the bacterial defense system toward oxidative stress. The sequence is that of 33 kDa chaperonin from Pseudomonas fluorescens (strain ATCC BAA-477 / NRRL B-23932 / Pf-5).